The following is an 836-amino-acid chain: MTDHTKEHENTPSMGFLDGLVNSISQQPKAIEEEIKFDGALPVLPLRNTVLFPDVIVPIGVARQRSIALLESLAPNSPVVFLMQTDADIDAPTPDELHKNGSVGLVLRTLRMPDNSMSVIVQGVKRVVVEAFTQTEPYLAAKVTPKDEEELEGVEFDAYARTTKQLASKIIELSPNSPNEASYAIQSIENTRFLIHFIASNISVPAAEKQKMIEAEGMKARAERLIHFLNREVQVLELSKQIQTKVKTDMDRSQREFILRQQLKTIQQELGEQDAQMQDVEKLREAVEKKNLPEEVTSVVSKEIDKLSRIPQASPDYSVTRNYVDTILALPWGHFSETVINLHEAEKILNQDHYGLGKVKDRILEYLAVLKLKSNMKAPILCFCGPPGVGKTSLGRSIARALGRKFIRISLGGVRDEAEIRGHRRTYIGSMPGRIIQGIKTAGTSNPVFMLDEIDKIGADFRGNPSSALLEVLDPAQNNAFSDHYLEIPYDLSKVMFIATANTLDPIPVPLRDRMEIINLSGYTEYEKLHIAERYLIPRQLEEHGIRPEDVSFDALTTKKIINAYTREAGVRNLERQIANVCRVIAKDIVIRRESDQPDETPITVVTADLKKYLGMEQFYPDVSEPVMLSGVAVGLAWTPVGGDILFIESTVMKGTGRLILTGQLGDVMKESAQAALSYLKSCADYFKIPDEAFRYWDVHVHVPQGAIPKDGPSAGVTILTSLASIYTQRKVKPCIAMTGEITLRGRILPVGGIKEKVLAAKRAGITEILLPEKNEKDVKEALETNGGAFSDVSFKYFHEMDDLIDYVLEPAENGAPQFKVEDKDHTPETTGNESE.

Residues 41-233 (LPVLPLRNTV…RLIHFLNREV (193 aa)) enclose the Lon N-terminal domain. 385–392 (GPPGVGKT) serves as a coordination point for ATP. Positions 627–811 (VMLSGVAVGL…DDLIDYVLEP (185 aa)) constitute a Lon proteolytic domain. Residues Ser-714 and Lys-757 contribute to the active site. The segment at 816–836 (APQFKVEDKDHTPETTGNESE) is disordered.

It belongs to the peptidase S16 family. In terms of assembly, homohexamer. Organized in a ring with a central cavity.

The protein resides in the cytoplasm. It carries out the reaction Hydrolysis of proteins in presence of ATP.. ATP-dependent serine protease that mediates the selective degradation of mutant and abnormal proteins as well as certain short-lived regulatory proteins. Required for cellular homeostasis and for survival from DNA damage and developmental changes induced by stress. Degrades polypeptides processively to yield small peptide fragments that are 5 to 10 amino acids long. Binds to DNA in a double-stranded, site-specific manner. This is Lon protease from Chloroherpeton thalassium (strain ATCC 35110 / GB-78).